Here is a 548-residue protein sequence, read N- to C-terminus: Splicing factor U2af large subunit B (548 aa).

A compositionally biased stretch (basic and acidic residues) spans 1-82 (MADDHAAAAD…DRDRDRDKDR (82 aa)). The tract at residues 1–156 (MADDHAAAAD…SKRVSGFDMA (156 aa)) is disordered. The span at 83 to 93 (DRHHRHHRERR) shows a compositional bias: basic residues. Residues 94–120 (EHRDRSDDHDRHRSRDSERRRDHERDG) are compositionally biased toward basic and acidic residues. The segment covering 121 to 149 (RRRHRSRSRSRSRGRDRRSRSRSRSKSKR) has biased composition (basic residues). RRM domains are found at residues 214–297 (RRVY…RPTD), 334–412 (DRIF…RANQ), and 453–539 (QVVS…YPEN).

The protein belongs to the splicing factor SR family.

The protein localises to the nucleus. Its function is as follows. Necessary for the splicing of pre-mRNA. The sequence is that of Splicing factor U2af large subunit B (U2AF65B) from Oryza sativa subsp. japonica (Rice).